A 546-amino-acid chain; its full sequence is MAAKDVKFNTEARNKMLKGVNILADAVKVTLGPKGRNVVLDKSFGAPRITKDGVSVAKEIELEDKFENMGAQMVKEVASRTNDEAGDGTTTATVLAQAIVREGMKSVAAGMNPMDLKRGIDLATAKVVEAIKAASRPVNDSAEVAQVGTISANGESEIGRQIAEAMQKVGNEGVITVEENKGLETETDVVEGMQFDRGYLSPYFVTNADKMIAELEDCMILLHEKKLSSLQPMVPLLEQVIQSQKPLLIIAEDVEGEALATLVVNKLRGGLKIAAVKAPGFGDRRKAMLQDIAILTGGQVISEDLGMKLESVTMDMLGTAKKISITKDETTIVDGAGEKAEIEARVAQIRTQIEETTSDYDREKLQERVAKLAGGVAVIRVGGMTEVEVKERKDRVDDALNATRAAVQEGVVVGGGVALVQAGKVLADLEGANADQTAGINIVRKAIEAPLRQIAENAGVDGAVVAGKVRESGDASFGFNAQTEEYGDMFKFGVIDPAKVVRTALEDASSVAGLLITTEAMVADKPQKDAPAGGGMPDMGGMGGMM.

Residues 30–33 (TLGP), K51, 87–91 (DGTTT), G415, and D496 each bind ATP. The disordered stretch occupies residues 526 to 546 (PQKDAPAGGGMPDMGGMGGMM). Residues 532 to 546 (AGGGMPDMGGMGGMM) show a composition bias toward gly residues.

It belongs to the chaperonin (HSP60) family. As to quaternary structure, forms a cylinder of 14 subunits composed of two heptameric rings stacked back-to-back. Interacts with the co-chaperonin GroES.

It is found in the cytoplasm. It carries out the reaction ATP + H2O + a folded polypeptide = ADP + phosphate + an unfolded polypeptide.. In terms of biological role, together with its co-chaperonin GroES, plays an essential role in assisting protein folding. The GroEL-GroES system forms a nano-cage that allows encapsulation of the non-native substrate proteins and provides a physical environment optimized to promote and accelerate protein folding. This Ruegeria pomeroyi (strain ATCC 700808 / DSM 15171 / DSS-3) (Silicibacter pomeroyi) protein is Chaperonin GroEL.